A 1073-amino-acid polypeptide reads, in one-letter code: 3-hydroxy-3-methylglutaryl-coenzyme A reductase 1 (1073 aa).

The next 8 membrane-spanning stretches (helical) occupy residues 23–43, 181–201, 211–231, 298–318, 326–346, 399–419, 459–479, and 498–518; these read FMVV…DDYI, FDIL…IKVF, FWLA…ALLV, HLVV…LTGL, SLIL…ILGL, IAYF…FWLG, GTVV…MVQL, and IISK…VYFL. Positions 182 to 346 constitute an SSD domain; sequence DILLIFVAYL…YTFFSAILGL (165 aa). A compositionally biased stretch (low complexity) spans 542-565; that stretch reads SSVTATTTTTATGTTSSGAATSKT. Residues 542 to 589 form a disordered region; it reads SSVTATTTTTATGTTSSGAATSKTIGNNKGLKSVQEIPDNEDESSDEE. A compositionally biased stretch (acidic residues) spans 579–589; the sequence is PDNEDESSDEE. Residue E714 is the Charge relay system of the active site. 720-726 serves as a coordination point for CoA; the sequence is STMRGCK. Residues 781–783 and 808–816 contribute to the NADP(+) site; these read SRF and DAMGMNMIS. K848 serves as the catalytic Charge relay system. 877–879 is a binding site for CoA; it reads VLK. D924 functions as the Charge relay system in the catalytic mechanism. Residues 997–1017 traverse the membrane as a helical segment; that stretch reads IVASAVLAAELSLCSALAAGH. A CoA-binding site is contributed by 1021–1022; sequence SH. The active-site Proton donor is the H1022. Residues 1025–1056 form a disordered region; it reads HNRSKAPAAGATTTTTPAITDSKASNGSIASN. 1026–1027 is an NADP(+) binding site; it reads NR. A compositionally biased stretch (low complexity) spans 1030-1042; the sequence is APAAGATTTTTPA. A compositionally biased stretch (polar residues) spans 1046 to 1055; sequence SKASNGSIAS.

The protein belongs to the HMG-CoA reductase family.

The protein localises to the endoplasmic reticulum membrane. The catalysed reaction is (R)-mevalonate + 2 NADP(+) + CoA = (3S)-3-hydroxy-3-methylglutaryl-CoA + 2 NADPH + 2 H(+). The protein operates within metabolic intermediate biosynthesis; (R)-mevalonate biosynthesis; (R)-mevalonate from acetyl-CoA: step 3/3. Its function is as follows. HMG-CoA reductase; part of the first module of ergosterol biosynthesis pathway that includes the early steps of the pathway, conserved across all eukaryotes, and which results in the formation of mevalonate from acetyl-coenzyme A (acetyl-CoA). HMG1 catalyzes the reduction of hydroxymethylglutaryl-CoA (HMG-CoA) to mevalonate. The first module starts with the action of the cytosolic acetyl-CoA acetyltransferase ERG10 that catalyzes the formation of acetoacetyl-CoA. The hydroxymethylglutaryl-CoA synthase ERG13 then condenses acetyl-CoA with acetoacetyl-CoA to form HMG-CoA. The 3-hydroxy-3-methylglutaryl-coenzyme A (HMG-CoA) reductase HMG1 finally reduces HMG-CoA to produce mevalonate. The sequence is that of 3-hydroxy-3-methylglutaryl-coenzyme A reductase 1 from Candida albicans (strain SC5314 / ATCC MYA-2876) (Yeast).